The primary structure comprises 715 residues: Polyribonucleotide nucleotidyltransferase (715 aa).

Residues Asp-493 and Asp-499 each contribute to the Mg(2+) site. In terms of domain architecture, KH spans 560 to 619 (PRMITVKINPEKIRDVIGKGGSVIRALTEETGTTIDISDDGVVTIASTSSEGMAEAKKRI). One can recognise an S1 motif domain in the interval 629–697 (GQVYEGTVLK…EKGRVRLSAK (69 aa)).

This sequence belongs to the polyribonucleotide nucleotidyltransferase family. It depends on Mg(2+) as a cofactor.

It is found in the cytoplasm. The catalysed reaction is RNA(n+1) + phosphate = RNA(n) + a ribonucleoside 5'-diphosphate. In terms of biological role, involved in mRNA degradation. Catalyzes the phosphorolysis of single-stranded polyribonucleotides processively in the 3'- to 5'-direction. This chain is Polyribonucleotide nucleotidyltransferase, found in Burkholderia cenocepacia (strain HI2424).